The chain runs to 1292 residues: MPTYNDDDDSSRPPSVHSERNQKPSSSQFLGVPSSNYNQRENSSRSGSSTISREPSSSGTMYPMASRDSMKESYDKNKGTPPDYTSYVSHSDAEPEQASSKSSTSIEDLLHTEYDDAPFAFSIPLLQRLQDPKNTSLLHAIHGLKGLCKGLKVDPSTGISTHEPHYADKLQMSDILNDDSNPKLVVHLDRIRSQDNNPEAKVSHDSDRVKYYGKNVLPEHDSKGLIRLMLEAFKDKVLILLSIAAVVSLALGLYQTFGQPPTLDPITGKPEPRVEWVEGVAIMAAIVIVVTVGGVNDWQKELQFKKLNAKVSNFDVQVLRDGAVHSTSVFDLVVGDVLFVEAGDVVPVDGVLIESNNLVLDESAMTGETDNIKKVDANTAIERTSPDVEYRKNADPYLISGTTILEGNGKLLVTAVGVNSFNGRTTMAMRTEGQATPLQLRLSRVADAIAKLGGAASALLFIVLLIEFLVRLKSNDSSSKNKGQEFLQILIVSVTLLVVAVPEGLPLAVTLALAFATNRMQKDNNLVRHLQACETMGTATNICSDKTGTLTQNRMTVVAGGFGTDVLFFDHNDETPTNVDQGSDSSKFEDAGASAFAFKRLSPELRDLTLYSIAVNSTCRQLFEDNSDTPRFIGSKTETALLDMSVKELGLTNVDSMRSSVDIKQFFSFSSDRKASGAIFEYKDKYYFVVKGMPERVLQQSTSVITNGSLDEVEDMHSHADYFKEMITGYAKRSLRTLGLCYRVFDSWPPKDIPTNDEDSSNPLKWEDAFTDMTFLGFFGIMDPIRPDVPLAVKVCQGAGVTVRMVTGDNIVTAKAIASQCGIYTEDGISMEGPEFRSLSDEKRLEILPKLDVLARSSPLDKQLLIEGLQKLGNVVAVTGDGTNDAPALKKANVGFSMGKSGTEVAKEASDIILMDDNFSSIVKAIAWGRTVNDAVKKFLQFQITVNITAVFLTIISAVASTDQSSVLTAVQLLWVNLIMDTLAALALATDPPTPEVLKRKPEKPGASLFTFDMWKMIICQSMYQLAVTLVLHFAGNSIFHYPSNTADMNTIVFNTFVWLQLFNEINNRRLDNKLNIFERINHNFLFIAIFVIVAGIQVIIVFFGGAAFSVKRIDGKGWAISIVFGVISIPLGALIRCVPNNFLRKVLPVKTIDTVFSWILNPRFRSKRRSTDHDVESLSLIPYEPTSPNEVIDSIRHSLGFVQRIRGGRIRHLLNNSKFDKQMEALPERLRPRVKQRFMKIRSPSVSSATSVALMIPISTLVSEASGRLGGHDIWISHNRQALDKKSSNVH.

Positions 1–105 are disordered; sequence MPTYNDDDDS…EQASSKSSTS (105 aa). Over 1–236 the chain is Cytoplasmic; that stretch reads MPTYNDDDDS…RLMLEAFKDK (236 aa). Positions 23–41 are enriched in polar residues; it reads KPSSSQFLGVPSSNYNQRE. Low complexity predominate over residues 44–60; the sequence is SRSGSSTISREPSSSGT. Over residues 68–78 the composition is skewed to basic and acidic residues; the sequence is DSMKESYDKNK. The chain crosses the membrane as a helical span at residues 237–257; sequence VLILLSIAAVVSLALGLYQTF. Residues 258-273 are Vacuolar-facing; sequence GQPPTLDPITGKPEPR. Residues 274 to 294 form a helical membrane-spanning segment; it reads VEWVEGVAIMAAIVIVVTVGG. Over 295-448 the chain is Cytoplasmic; sequence VNDWQKELQF…QLRLSRVADA (154 aa). Residues 449 to 469 traverse the membrane as a helical segment; that stretch reads IAKLGGAASALLFIVLLIEFL. At 470–488 the chain is on the vacuolar side; that stretch reads VRLKSNDSSSKNKGQEFLQ. The helical transmembrane segment at 489-509 threads the bilayer; sequence ILIVSVTLLVVAVPEGLPLAV. V498 and E503 together coordinate Ca(2+). At 510–938 the chain is on the cytoplasmic side; the sequence is TLALAFATNR…GRTVNDAVKK (429 aa). The 4-aspartylphosphate intermediate role is filled by D545. D545 and T547 together coordinate Mg(2+). ATP-binding positions include T547, E638, K691, R736, 807–809, R856, and K862; that span reads TGD. Residue D881 participates in Mg(2+) binding. Position 884 (N884) interacts with ATP. The helical transmembrane segment at 939–959 threads the bilayer; that stretch reads FLQFQITVNITAVFLTIISAV. Residue N947 participates in Ca(2+) binding. At 960–966 the chain is on the vacuolar side; that stretch reads ASTDQSS. Residues 967–987 form a helical membrane-spanning segment; it reads VLTAVQLLWVNLIMDTLAALA. 2 residues coordinate Ca(2+): N977 and D981. The Cytoplasmic portion of the chain corresponds to 988–1016; the sequence is LATDPPTPEVLKRKPEKPGASLFTFDMWK. The chain crosses the membrane as a helical span at residues 1017 to 1037; it reads MIICQSMYQLAVTLVLHFAGN. At 1038–1084 the chain is on the vacuolar side; it reads SIFHYPSNTADMNTIVFNTFVWLQLFNEINNRRLDNKLNIFERINHN. Residues 1085 to 1105 form a helical membrane-spanning segment; the sequence is FLFIAIFVIVAGIQVIIVFFG. Residues 1106 to 1115 are Cytoplasmic-facing; sequence GAAFSVKRID. A helical membrane pass occupies residues 1116–1136; the sequence is GKGWAISIVFGVISIPLGALI. The Vacuolar segment spans residues 1137-1292; sequence RCVPNNFLRK…ALDKKSSNVH (156 aa).

The protein belongs to the cation transport ATPase (P-type) (TC 3.A.3) family.

It is found in the vacuole membrane. It catalyses the reaction Ca(2+)(in) + ATP + H2O = Ca(2+)(out) + ADP + phosphate + H(+). Functionally, this magnesium-dependent enzyme catalyzes the hydrolysis of ATP coupled with the transport of calcium. Transports the calcium to the vacuole and participates in the control of the cytosolic free calcium. In Schizosaccharomyces pombe (strain 972 / ATCC 24843) (Fission yeast), this protein is Calcium-transporting ATPase 2 (pmc1).